The chain runs to 112 residues: Large ribosomal subunit protein uL22 (112 aa).

Belongs to the universal ribosomal protein uL22 family. In terms of assembly, part of the 50S ribosomal subunit.

This protein binds specifically to 23S rRNA; its binding is stimulated by other ribosomal proteins, e.g. L4, L17, and L20. It is important during the early stages of 50S assembly. It makes multiple contacts with different domains of the 23S rRNA in the assembled 50S subunit and ribosome. Its function is as follows. The globular domain of the protein is located near the polypeptide exit tunnel on the outside of the subunit, while an extended beta-hairpin is found that lines the wall of the exit tunnel in the center of the 70S ribosome. The chain is Large ribosomal subunit protein uL22 from Moorella thermoacetica (strain ATCC 39073 / JCM 9320).